Consider the following 347-residue polypeptide: Anthranilate phosphoribosyltransferase (347 aa).

5-phospho-alpha-D-ribose 1-diphosphate-binding positions include Gly-88, 91-92 (GD), Thr-96, 98-101 (NIST), 116-124 (KHGNRAASS), and Ser-128. Gly-88 contributes to the anthranilate binding site. Position 100 (Ser-100) interacts with Mg(2+). Asn-119 is a binding site for anthranilate. Arg-174 serves as a coordination point for anthranilate. Mg(2+) contacts are provided by Asp-233 and Glu-234.

The protein belongs to the anthranilate phosphoribosyltransferase family. As to quaternary structure, homodimer. Mg(2+) serves as cofactor.

The catalysed reaction is N-(5-phospho-beta-D-ribosyl)anthranilate + diphosphate = 5-phospho-alpha-D-ribose 1-diphosphate + anthranilate. It participates in amino-acid biosynthesis; L-tryptophan biosynthesis; L-tryptophan from chorismate: step 2/5. Catalyzes the transfer of the phosphoribosyl group of 5-phosphorylribose-1-pyrophosphate (PRPP) to anthranilate to yield N-(5'-phosphoribosyl)-anthranilate (PRA). The sequence is that of Anthranilate phosphoribosyltransferase from Rhodospirillum rubrum (strain ATCC 11170 / ATH 1.1.1 / DSM 467 / LMG 4362 / NCIMB 8255 / S1).